The following is a 321-amino-acid chain: Sialic acid-binding periplasmic protein SiaP (321 aa).

Residues 1 to 22 (MKTINKITIAILTLSAAASVNA) form the signal peptide.

Belongs to the bacterial solute-binding protein 7 family. As to quaternary structure, the complex comprises the extracytoplasmic solute receptor protein SiaP, and the two transmembrane proteins SiaQ and SiaM.

The protein localises to the periplasm. Its function is as follows. Part of the tripartite ATP-independent periplasmic (TRAP) transport system SiaPQM that catalyzes unidirectional Na(+)-dependent sialic acid uptake. Binds the common sialic acid N-acetylneuraminic acid (Neu5Ac) with a high affinity. The protein is Sialic acid-binding periplasmic protein SiaP of Vibrio cholerae serotype O1 (strain ATCC 39315 / El Tor Inaba N16961).